The primary structure comprises 176 residues: MFHATTIVAVRKGGKVAVAGDGQVTFGQNTIIKKGARKIRRLYKDSVLAGFAGSVADAITLFEKFEGKLEEYHGNLQRAAVELAKDWRTDRILRRLEALLIVADKENLLIISGSGEVIEPDDGVAAIGSGGPYALAAARALVRHTSMEAEDIAREALAVAAEICVYTNDNIIVERL.

Thr-5 is a catalytic residue. Na(+) is bound by residues Ala-161, Cys-164, and Thr-167.

The protein belongs to the peptidase T1B family. HslV subfamily. As to quaternary structure, a double ring-shaped homohexamer of HslV is capped on each side by a ring-shaped HslU homohexamer. The assembly of the HslU/HslV complex is dependent on binding of ATP.

It localises to the cytoplasm. It carries out the reaction ATP-dependent cleavage of peptide bonds with broad specificity.. With respect to regulation, allosterically activated by HslU binding. Its function is as follows. Protease subunit of a proteasome-like degradation complex believed to be a general protein degrading machinery. This is ATP-dependent protease subunit HslV from Pelotomaculum thermopropionicum (strain DSM 13744 / JCM 10971 / SI).